The following is a 303-amino-acid chain: Magainins (303 aa).

An N-terminal signal peptide occupies residues 1–18; that stretch reads MFKGLFICSLIAVICANA. Propeptides lie at residues 19–26, 33–36, 62–72, 79–82, 108–118, 125–128, 154–164, 171–174, 200–210, 217–220, 246–256, 263–266, and 292–303; these read LPQPEASA, REVR, DAEAVGPEAFA, and DAEAVDDRRWVE.

This sequence belongs to the gastrin/cholecystokinin family. Magainin subfamily. Synthesized in the stomach and stored in a novel granular multinucleated cell in the gastric mucosa. It is stored as active, processed peptides in large granules within the granular gland secretions of the skin.

The protein resides in the secreted. Functionally, antimicrobial peptides that inhibit the growth of numerous species of bacteria and fungi and induce osmotic lysis of protozoa. Rapidly inactivates channel catfish herpesvirus (ED(50)=48 uM) over a wide temperature range. Magainins are membrane lytic agents. This Xenopus laevis (African clawed frog) protein is Magainins (magainins).